A 240-amino-acid chain; its full sequence is Phosphoribosylaminoimidazole-succinocarboxamide synthase (240 aa).

The protein belongs to the SAICAR synthetase family.

It catalyses the reaction 5-amino-1-(5-phospho-D-ribosyl)imidazole-4-carboxylate + L-aspartate + ATP = (2S)-2-[5-amino-1-(5-phospho-beta-D-ribosyl)imidazole-4-carboxamido]succinate + ADP + phosphate + 2 H(+). It participates in purine metabolism; IMP biosynthesis via de novo pathway; 5-amino-1-(5-phospho-D-ribosyl)imidazole-4-carboxamide from 5-amino-1-(5-phospho-D-ribosyl)imidazole-4-carboxylate: step 1/2. The sequence is that of Phosphoribosylaminoimidazole-succinocarboxamide synthase from Limosilactobacillus fermentum (strain NBRC 3956 / LMG 18251) (Lactobacillus fermentum).